Consider the following 197-residue polypeptide: Recombination protein RecR (197 aa).

The C4-type zinc-finger motif lies at 56–71 (CERCNTFTETEICQRC). The 96-residue stretch at 79-174 (SLLCVVEMPA…RVSRLSRGVP (96 aa)) folds into the Toprim domain.

The protein belongs to the RecR family.

Functionally, may play a role in DNA repair. It seems to be involved in an RecBC-independent recombinational process of DNA repair. It may act with RecF and RecO. This is Recombination protein RecR from Aromatoleum aromaticum (strain DSM 19018 / LMG 30748 / EbN1) (Azoarcus sp. (strain EbN1)).